The following is a 349-amino-acid chain: Putative phytanoyl-CoA dioxygenase (349 aa).

Residues Lys-118 and 169–171 (HLD) each bind 2-oxoglutarate. Residues His-169 and Asp-171 each contribute to the Fe cation site.

Belongs to the PhyH family. It depends on Fe cation as a cofactor. L-ascorbate is required as a cofactor.

It catalyses the reaction phytanoyl-CoA + 2-oxoglutarate + O2 = 2-hydroxyphytanoyl-CoA + succinate + CO2. The protein operates within lipid metabolism; fatty acid metabolism. Functionally, converts phytanoyl-CoA to 2-hydroxyphytanoyl-CoA. This is Putative phytanoyl-CoA dioxygenase from Dictyostelium discoideum (Social amoeba).